We begin with the raw amino-acid sequence, 29 residues long: Galanin (29 aa).

Alanine 29 carries the post-translational modification Alanine amide.

The protein belongs to the galanin family.

The protein localises to the secreted. Functionally, contracts smooth muscle of the gastrointestinal and genitourinary tract, regulates growth hormone release, modulates insulin release, and may be involved in the control of adrenal secretion. This is Galanin (gal) from Amia calva (Bowfin).